A 671-amino-acid polypeptide reads, in one-letter code: Vinexin (671 aa).

At Gln2 the chain carries N-acetylalanine. At Arg6 the chain carries Phosphoserine. 5 disordered regions span residues 46-111, 166-215, 249-268, 295-324, and 337-383; these read LNFQ…TKDS, TFEE…RPGA, LETGQRPKKPLVDDPGEKPS, TRLPSPKSSPAPRRAPEQRPPAGPASAWSS, and SLSP…KKRK. Over residues 88 to 108 the composition is skewed to polar residues; sequence PSASTKIPASQHTQNWSATWT. In terms of domain architecture, SoHo spans 115–187; that stretch reads DKRWVKYEGI…GAQQRPAHRP (73 aa). Residue Ser348 is modified to Phosphoserine. Polar residues predominate over residues 359–368; sequence PSSTRDPSAS. SH3 domains are found at residues 380 to 439 and 454 to 515; these read KKRK…VLPA and LEYG…VSRE. The binds to vinculin stretch occupies residues 380 to 515; sequence KKRKAARLKF…PASYVQVSRE (136 aa). Phosphoserine is present on Ser395. The tract at residues 519-611 is disordered; sequence RLCDDGPQLP…LGTSSPNTSQ (93 aa). Ser530 is modified (phosphoserine; by MAPK1). Positions 535–553 are enriched in low complexity; that stretch reads AAARSARHPSSPSALRSPA. Residues Ser544, Ser545, Ser547, Ser551, and Ser563 each carry the phosphoserine modification. Over residues 560–584 the composition is skewed to polar residues; sequence GQTSPRRTGFSFPTQEPRPQTQNLG. An SH3 3 domain is found at 612–671; sequence IHWTPYRAMYQYRPQNEDELELREGDRVDVMQQCDDGWFVGVSRRTQKFGTFPGNYVAPV. The interval 612-671 is binds to SOS; sequence IHWTPYRAMYQYRPQNEDELELREGDRVDVMQQCDDGWFVGVSRRTQKFGTFPGNYVAPV.

As to quaternary structure, interacts with DLG5 through its third SH3 domain. Interacts with vinculin by the first two SH3 domains and the proline rich region of vinculin. Binds to SOS (guanine nucleotide exchange factor of RAS and RAC), through its third SH3 domain. The formation of this complex is down-regulated by phosphorylation of SOS. Interacts with INPPL1/SHIP2, SAFB2, SOCS7 and SRCIN1. Interacts with FASLG. Interacts with MAPK1/ERK2. Post-translationally, phosphorylated at Ser-530 by MAPK1/ERK2 during cell spreading. As to expression, both isoforms are expressed in different tissues like heart, placenta, brain, skeletal muscle and pancreas. Isoform beta is especially found in liver.

Its subcellular location is the cell junction. It is found in the cytoplasm. The protein localises to the cytoskeleton. It localises to the nucleus. Its function is as follows. Vinexin alpha isoform promotes up-regulation of actin stress fiber formation. Vinexin beta isoform plays a role in cell spreading and enhances the activation of JNK/SAPK in response to EGF stimulation by using its third SH3 domain. The protein is Vinexin (SORBS3) of Homo sapiens (Human).